Here is a 172-residue protein sequence, read N- to C-terminus: Large ribosomal subunit protein bL9 (172 aa).

The protein belongs to the bacterial ribosomal protein bL9 family.

Functionally, binds to the 23S rRNA. This Chlamydia abortus (strain DSM 27085 / S26/3) (Chlamydophila abortus) protein is Large ribosomal subunit protein bL9.